A 360-amino-acid polypeptide reads, in one-letter code: Phosphoserine aminotransferase (360 aa).

R42 contacts L-glutamate. Pyridoxal 5'-phosphate is bound by residues 76–77 (AS), W102, T152, D171, and Q194. Residue K195 is modified to N6-(pyridoxal phosphate)lysine. 236–237 (NT) contacts pyridoxal 5'-phosphate.

It belongs to the class-V pyridoxal-phosphate-dependent aminotransferase family. SerC subfamily. Homodimer. Requires pyridoxal 5'-phosphate as cofactor.

Its subcellular location is the cytoplasm. It carries out the reaction O-phospho-L-serine + 2-oxoglutarate = 3-phosphooxypyruvate + L-glutamate. The enzyme catalyses 4-(phosphooxy)-L-threonine + 2-oxoglutarate = (R)-3-hydroxy-2-oxo-4-phosphooxybutanoate + L-glutamate. The protein operates within amino-acid biosynthesis; L-serine biosynthesis; L-serine from 3-phospho-D-glycerate: step 2/3. Functionally, catalyzes the reversible conversion of 3-phosphohydroxypyruvate to phosphoserine and of 3-hydroxy-2-oxo-4-phosphonooxybutanoate to phosphohydroxythreonine. This is Phosphoserine aminotransferase from Geobacillus kaustophilus (strain HTA426).